Consider the following 100-residue polypeptide: Small ribosomal subunit protein uS14c (100 aa).

Belongs to the universal ribosomal protein uS14 family. In terms of assembly, part of the 30S ribosomal subunit.

Its subcellular location is the plastid. It localises to the chloroplast. Functionally, binds 16S rRNA, required for the assembly of 30S particles. The protein is Small ribosomal subunit protein uS14c of Barbarea verna (Land cress).